A 278-amino-acid chain; its full sequence is Putative carbamate hydrolase RutD (278 aa).

The protein belongs to the AB hydrolase superfamily. Hydrolase RutD family.

The enzyme catalyses carbamate + 2 H(+) = NH4(+) + CO2. Involved in pyrimidine catabolism. May facilitate the hydrolysis of carbamate, a reaction that can also occur spontaneously. The chain is Putative carbamate hydrolase RutD from Yersinia enterocolitica serotype O:8 / biotype 1B (strain NCTC 13174 / 8081).